A 261-amino-acid chain; its full sequence is Glucosamine-6-phosphate deaminase (261 aa).

The active-site Proton acceptor; for enolization step is Asp67. Catalysis depends on Asn135, which acts as the For ring-opening step. His137 serves as the catalytic Proton acceptor; for ring-opening step. Glu142 functions as the For ring-opening step in the catalytic mechanism.

This sequence belongs to the glucosamine/galactosamine-6-phosphate isomerase family. NagB subfamily. As to quaternary structure, homohexamer.

The catalysed reaction is alpha-D-glucosamine 6-phosphate + H2O = beta-D-fructose 6-phosphate + NH4(+). It participates in amino-sugar metabolism; N-acetylneuraminate degradation; D-fructose 6-phosphate from N-acetylneuraminate: step 5/5. Catalyzes the reversible isomerization-deamination of glucosamine 6-phosphate (GlcN6P) to form fructose 6-phosphate (Fru6P) and ammonium ion. The sequence is that of Glucosamine-6-phosphate deaminase from Hahella chejuensis (strain KCTC 2396).